Reading from the N-terminus, the 426-residue chain is 26S proteasome regulatory subunit 7 (426 aa).

An ATP-binding site is contributed by 209–216 (GPPGTGKT).

It belongs to the AAA ATPase family.

The protein localises to the cytoplasm. The protein resides in the nucleus. The 26S proteasome is involved in the ATP-dependent degradation of ubiquitinated proteins. The regulatory (or ATPase) complex confers ATP dependency and substrate specificity to the 26S complex. The polypeptide is 26S proteasome regulatory subunit 7 (RPT1) (Spinacia oleracea (Spinach)).